A 91-amino-acid polypeptide reads, in one-letter code: Peptide Ctry2146 (91 aa).

Positions 1-23 (MKTQTLLVTFLVVLLMVATQTEA) are cleaved as a signal peptide. Residue Leu33 is modified to Leucine amide. A propeptide spanning residues 37–91 (GLLDGLLGKRGLLFGKRGPLFGKRALTNQDFLDFAYDPSLSAADMDALEMLFEDY) is cleaved from the precursor.

It belongs to the non-disulfide-bridged peptide (NDBP) superfamily. Short antimicrobial peptide (group 4) family. In terms of tissue distribution, expressed by the venom gland.

It is found in the secreted. The protein resides in the target cell membrane. Its function is as follows. Antimicrobial peptide. The sequence is that of Peptide Ctry2146 from Chaerilus tryznai (Scorpion).